A 425-amino-acid polypeptide reads, in one-letter code: tRNA(Ile)-lysidine synthase (425 aa).

Residue 27–32 (SGGLDS) participates in ATP binding.

Belongs to the tRNA(Ile)-lysidine synthase family.

It is found in the cytoplasm. The enzyme catalyses cytidine(34) in tRNA(Ile2) + L-lysine + ATP = lysidine(34) in tRNA(Ile2) + AMP + diphosphate + H(+). In terms of biological role, ligates lysine onto the cytidine present at position 34 of the AUA codon-specific tRNA(Ile) that contains the anticodon CAU, in an ATP-dependent manner. Cytidine is converted to lysidine, thus changing the amino acid specificity of the tRNA from methionine to isoleucine. This chain is tRNA(Ile)-lysidine synthase, found in Streptococcus pneumoniae (strain P1031).